The sequence spans 507 residues: Proton-coupled zinc antiporter SLC30A1 (507 aa).

The Cytoplasmic portion of the chain corresponds to 1–10; it reads MGCWGRNRGR. The helical transmembrane segment at 11–31 threads the bilayer; it reads LLCMLLLTFMFMVLEVVVSRV. Topologically, residues 32 to 35 are extracellular; the sequence is TASL. Residues 36-56 traverse the membrane as a helical segment; sequence AMLSDSFHMLSDVLALVVALV. Zn(2+)-binding residues include His43 and Asp47. The Cytoplasmic portion of the chain corresponds to 57–78; the sequence is AERFARRTHATQKNTFGWIRAE. The chain crosses the membrane as a helical span at residues 79–99; the sequence is VMGALVNAIFLTGLCFAILLE. Topologically, residues 100 to 113 are extracellular; sequence AVERFIEPHEMQQP. Residues 114–134 traverse the membrane as a helical segment; the sequence is LVVLSVGVAGLLVNVLGLCLF. Residues 135 to 247 are Cytoplasmic-facing; the sequence is HHHSGEGQGA…RAGQLNMRGV (113 aa). Positions 140–218 are disordered; that stretch reads EGQGAGHGHS…EKLRSDDPVD (79 aa). The 6 X 2 AA approximate repeats of H-G stretch occupies residues 145 to 156; the sequence is GHGHSHGHGHGH. The segment covering 147–165 has biased composition (basic residues); it reads GHSHGHGHGHLAKGARKAG. A compositionally biased stretch (polar residues) spans 188–200; sequence TNTLVANTSNSNG. Over residues 204-215 the composition is skewed to basic and acidic residues; that stretch reads DQAEPEKLRSDD. The chain crosses the membrane as a helical span at residues 248–268; sequence FLHVLGDALGSVIVVVNALVF. The Zn(2+) site is built by His250 and Asp254. Residues 269-307 are Extracellular-facing; it reads YFSWKGCTEDDFCVNPCFPDPCKSSVELMNSTQAPMHEA. Asn298 carries N-linked (GlcNAc...) asparagine glycosylation. Residues 308–328 form a helical membrane-spanning segment; sequence GPCWVLYLDPTLCIIMVCILL. Residues 329 to 507 lie on the Cytoplasmic side of the membrane; that stretch reads YTTYPLLKES…VPNKQPESSL (179 aa). The residue at position 506 (Ser506) is a Phosphoserine.

This sequence belongs to the cation diffusion facilitator (CDF) transporter (TC 2.A.4) family. SLC30A subfamily. As to quaternary structure, homodimer. Interacts with TMEM163. Interacts and forms a complex with TMC6 and TMC8; the interaction regulates zinc transport into the ER. As to expression, widely expressed. Detected in duodenum and jejunum but not in ileum and colon (at protein level). Expressed by neuroglial cells (at protein level).

Its subcellular location is the cell membrane. It localises to the basolateral cell membrane. The protein resides in the cytoplasmic vesicle membrane. The protein localises to the cytoplasm. It is found in the endoplasmic reticulum membrane. Its subcellular location is the golgi apparatus membrane. It localises to the nucleus membrane. The catalysed reaction is Zn(2+)(in) + 2 H(+)(out) = Zn(2+)(out) + 2 H(+)(in). Calcium-dependent. Zinc ion:proton antiporter that could function at the plasma membrane mediating zinc efflux from cells against its electrochemical gradient protecting them from intracellular zinc accumulation and toxicity. Alternatively, could prevent the transport to the plasma membrane of CACNB2, the L-type calcium channels regulatory subunit, through a yet to be defined mechanism. By modulating the expression of these channels at the plasma membrane, could prevent calcium and zinc influx into cells. By the same mechanism, could also prevent L-type calcium channels-mediated heavy metal influx into cells. In some cells, could also function as a zinc ion:proton antiporter mediating zinc entry into the lumen of cytoplasmic vesicles. In macrophages, can increase zinc ions concentration into the lumen of cytoplasmic vesicles containing engulfed bacteria and could help inactivate them. Forms a complex with TMC6/EVER1 and TMC8/EVER2 at the ER membrane of keratynocytes which facilitates zinc uptake into the ER. Down-regulates the activity of transcription factors induced by zinc and cytokines. This Rattus norvegicus (Rat) protein is Proton-coupled zinc antiporter SLC30A1.